Consider the following 482-residue polypeptide: Cobyric acid synthase (482 aa).

Positions 243-430 (ACKVVVPQLE…LHGLFTSDAF (188 aa)) constitute a GATase cobBQ-type domain. C325 serves as the catalytic Nucleophile. The active site involves H422.

It belongs to the CobB/CobQ family. CobQ subfamily.

Its pathway is cofactor biosynthesis; adenosylcobalamin biosynthesis. Functionally, catalyzes amidations at positions B, D, E, and G on adenosylcobyrinic A,C-diamide. NH(2) groups are provided by glutamine, and one molecule of ATP is hydrogenolyzed for each amidation. In Ruegeria sp. (strain TM1040) (Silicibacter sp.), this protein is Cobyric acid synthase.